We begin with the raw amino-acid sequence, 83 residues long: Small ribosomal subunit protein bS20 (83 aa).

Positions 1–21 (MPNIKSAIKRVRTTETAEERN) are disordered. Over residues 12-21 (RTTETAEERN) the composition is skewed to basic and acidic residues.

The protein belongs to the bacterial ribosomal protein bS20 family.

Its function is as follows. Binds directly to 16S ribosomal RNA. The chain is Small ribosomal subunit protein bS20 from Staphylococcus epidermidis (strain ATCC 35984 / DSM 28319 / BCRC 17069 / CCUG 31568 / BM 3577 / RP62A).